Consider the following 175-residue polypeptide: ATP synthase subunit delta (175 aa).

This sequence belongs to the ATPase delta chain family. As to quaternary structure, F-type ATPases have 2 components, F(1) - the catalytic core - and F(0) - the membrane proton channel. F(1) has five subunits: alpha(3), beta(3), gamma(1), delta(1), epsilon(1). F(0) has three main subunits: a(1), b(2) and c(10-14). The alpha and beta chains form an alternating ring which encloses part of the gamma chain. F(1) is attached to F(0) by a central stalk formed by the gamma and epsilon chains, while a peripheral stalk is formed by the delta and b chains.

It localises to the cell inner membrane. Functionally, f(1)F(0) ATP synthase produces ATP from ADP in the presence of a proton or sodium gradient. F-type ATPases consist of two structural domains, F(1) containing the extramembraneous catalytic core and F(0) containing the membrane proton channel, linked together by a central stalk and a peripheral stalk. During catalysis, ATP synthesis in the catalytic domain of F(1) is coupled via a rotary mechanism of the central stalk subunits to proton translocation. In terms of biological role, this protein is part of the stalk that links CF(0) to CF(1). It either transmits conformational changes from CF(0) to CF(1) or is implicated in proton conduction. In Xanthomonas oryzae pv. oryzae (strain MAFF 311018), this protein is ATP synthase subunit delta.